Reading from the N-terminus, the 97-residue chain is Large ribosomal subunit protein bL27 (97 aa).

A propeptide spanning residues 1 to 12 (MLKMNLANLQLF) is cleaved from the precursor. Residues 14–37 (HKKGGGSTSNGRDSQAKRLGAKAA) form a disordered region.

It belongs to the bacterial ribosomal protein bL27 family. In terms of processing, the N-terminus is cleaved by ribosomal processing cysteine protease Prp.

In Streptococcus uberis (strain ATCC BAA-854 / 0140J), this protein is Large ribosomal subunit protein bL27.